An 821-amino-acid chain; its full sequence is Maternal DNA replication licensing factor mcm6 (821 aa).

A C4-type zinc finger spans residues 159 to 186; it reads CMDCQSVVKDVEQQFRYTQPTICKNPVC. The 208-residue stretch at 347–554 folds into the MCM domain; the sequence is LYHNLCTSLF…TDYAIARRIV (208 aa). Residue 397–404 participates in ATP binding; it reads GDPSTSKS. The Arginine finger signature appears at 529-532; that stretch reads SRFD.

It belongs to the MCM family. In terms of assembly, component of the mcm2-7 complex (RLF-M). The complex forms a toroidal hexameric ring with the proposed subunit order mcm2-mcm6-mcm4-mcm7-mcm3-mcm5. The heterodimer of mmcm3/mcm5 interacts with mcm4, mmcm6, mcm7 and weakly with mcm2. Component of the CMG helicase complex, composed of the mcm2-7 complex, the GINS complex and cdc45.

It is found in the nucleus. It localises to the chromosome. The catalysed reaction is ATP + H2O = ADP + phosphate + H(+). Functionally, acts as a component of the mcm2-7 complex (mcm complex) which is the putative replicative helicase essential for 'once per cell cycle' DNA replication initiation and elongation in eukaryotic cells. The active ATPase sites in the mcm2-7 ring are formed through the interaction surfaces of two neighboring subunits such that a critical structure of a conserved arginine finger motif is provided in trans relative to the ATP-binding site of the Walker A box of the adjacent subunit. The six ATPase active sites, however, are likely to contribute differentially to the complex helicase activity. The existence of maternal and zygotic forms of mcm3 and mcm6 suggests that specific forms of mcm2-7 complexes may be used during different stages of development. The polypeptide is Maternal DNA replication licensing factor mcm6 (Xenopus tropicalis (Western clawed frog)).